The primary structure comprises 459 residues: Argininosuccinate lyase (459 aa).

This sequence belongs to the lyase 1 family. Argininosuccinate lyase subfamily.

Its subcellular location is the cytoplasm. It catalyses the reaction 2-(N(omega)-L-arginino)succinate = fumarate + L-arginine. It participates in amino-acid biosynthesis; L-arginine biosynthesis; L-arginine from L-ornithine and carbamoyl phosphate: step 3/3. This Desulforudis audaxviator (strain MP104C) protein is Argininosuccinate lyase.